Here is a 651-residue protein sequence, read N- to C-terminus: Protein cueball (651 aa).

Residues 1-21 (MILRLFILLSIITVYLQLSVG) form the signal peptide. Residues 22 to 540 (IQQQFEFAIT…VCLAPNAWTG (519 aa)) lie on the Extracellular side of the membrane. N-linked (GlcNAc...) asparagine glycans are attached at residues asparagine 77, asparagine 102, and asparagine 114. LDL-receptor class B repeat units lie at residues 115–162 (RTIY…DICG), 163–207 (RKLY…DQGA), and 208–253 (KRIF…TRNA). Asparagine 183 carries N-linked (GlcNAc...) asparagine glycosylation. The disordered stretch occupies residues 290–311 (VEGEEGTGAMDDNDIWPVGDFE). Residue asparagine 324 is glycosylated (N-linked (GlcNAc...) asparagine). EGF-like domains lie at 374-408 (QLDE…TRCE), 409-440 (TNEC…YSGE), and 443-480 (EVKK…LRCE). 7 disulfide bridges follow: cysteine 383–cysteine 396, cysteine 398–cysteine 407, cysteine 412–cysteine 421, cysteine 416–cysteine 431, cysteine 447–cysteine 457, cysteine 451–cysteine 468, and cysteine 470–cysteine 479. Residues asparagine 482 and asparagine 499 are each glycosylated (N-linked (GlcNAc...) asparagine). A helical membrane pass occupies residues 541–561 (SVLMPLMISLILILLLLTIFI). The Cytoplasmic portion of the chain corresponds to 562-651 (HGLRRLYKPK…LIHNMEDDLY (90 aa)).

It belongs to the cueball family.

The protein localises to the cell membrane. Has a role in spermatogenesis and oogenesis. This is Protein cueball from Drosophila willistoni (Fruit fly).